A 1177-amino-acid polypeptide reads, in one-letter code: Zinc finger CCCH domain-containing protein 6 (1177 aa).

Over residues 1 to 12 (MTDSEHAGHDRE) the composition is skewed to basic and acidic residues. Disordered regions lie at residues 1–137 (MTDS…SKEY) and 179–206 (QESS…TEYR). Acidic residues predominate over residues 13-31 (DGELEDGEIDDAGFEETQD). Residues 27–73 (EETQDQEAKENEKQKNEKAYRKSRKKHKKEREKKKSKRRKHEKHKHN) are a coiled coil. Positions 32-46 (QEAKENEKQKNEKAY) are enriched in basic and acidic residues. Residues 47–73 (RKSRKKHKKEREKKKSKRRKHEKHKHN) are compositionally biased toward basic residues. Residues 179–188 (QESSGSSFSK) show a composition bias toward low complexity. 3 C3H1-type zinc fingers span residues 271-297 (KGKQ…HDAE), 299-326 (EKKK…HSEF), and 327-350 (PCKF…HDDL). Residues 347 to 383 (HDDLTKETRKLLDKVLNADEELVNEDERELEELRKRG) adopt a coiled-coil conformation. Disordered stretches follow at residues 383–416 (GITP…FETD), 446–587 (PPAF…ESMQ), 622–654 (QQQP…SASG), 670–767 (RYQE…KKPH), 780–826 (PKKL…SERE), 942–988 (EQSG…SSRS), 1043–1101 (DPRD…PVDG), and 1132–1162 (LLRP…DKPL). A compositionally biased stretch (low complexity) spans 493–502 (HPGSPGHHPC). 2 stretches are compositionally biased toward polar residues: residues 512–522 (ENPSLLPSSSE) and 564–587 (SSPA…ESMQ). Over residues 713-728 (RTLQKQTGTLRNQQLP) the composition is skewed to polar residues. Residues 753 to 767 (PRLRTVPRQDIKKPH) are compositionally biased toward basic and acidic residues. Over residues 955-967 (GDPRLQKNFDPRL) the composition is skewed to basic and acidic residues. Polar residues-rich tracts occupy residues 1050–1064 (LSAT…GENT) and 1077–1093 (KNQP…NTTA). Phosphoserine is present on serine 1150.

This Mus musculus (Mouse) protein is Zinc finger CCCH domain-containing protein 6 (Zc3h6).